The chain runs to 164 residues: S-ribosylhomocysteine lyase (164 aa).

The Fe cation site is built by His61, His65, and Cys131.

The protein belongs to the LuxS family. In terms of assembly, homodimer. The cofactor is Fe cation.

It carries out the reaction S-(5-deoxy-D-ribos-5-yl)-L-homocysteine = (S)-4,5-dihydroxypentane-2,3-dione + L-homocysteine. Its function is as follows. Involved in the synthesis of autoinducer 2 (AI-2) which is secreted by bacteria and is used to communicate both the cell density and the metabolic potential of the environment. The regulation of gene expression in response to changes in cell density is called quorum sensing. Catalyzes the transformation of S-ribosylhomocysteine (RHC) to homocysteine (HC) and 4,5-dihydroxy-2,3-pentadione (DPD). In Bifidobacterium longum (strain DJO10A), this protein is S-ribosylhomocysteine lyase.